The sequence spans 213 residues: Uridine kinase (213 aa).

G15 to S22 is an ATP binding site.

Belongs to the uridine kinase family.

It is found in the cytoplasm. The catalysed reaction is uridine + ATP = UMP + ADP + H(+). It catalyses the reaction cytidine + ATP = CMP + ADP + H(+). It functions in the pathway pyrimidine metabolism; CTP biosynthesis via salvage pathway; CTP from cytidine: step 1/3. It participates in pyrimidine metabolism; UMP biosynthesis via salvage pathway; UMP from uridine: step 1/1. This chain is Uridine kinase, found in Sodalis glossinidius (strain morsitans).